We begin with the raw amino-acid sequence, 68 residues long: Small ribosomal subunit protein bS21 (68 aa).

The tract at residues 39-68 is disordered; it reads PPSVKRVRKKQESERRHRKERAMRRRMMEE. Positions 54-68 are enriched in basic residues; it reads RHRKERAMRRRMMEE.

The protein belongs to the bacterial ribosomal protein bS21 family.

This Orientia tsutsugamushi (strain Boryong) (Rickettsia tsutsugamushi) protein is Small ribosomal subunit protein bS21.